A 515-amino-acid polypeptide reads, in one-letter code: 1-pyrroline-5-carboxylate dehydrogenase (515 aa).

Active-site residues include glutamate 286 and cysteine 320.

It belongs to the aldehyde dehydrogenase family. RocA subfamily.

It carries out the reaction L-glutamate 5-semialdehyde + NAD(+) + H2O = L-glutamate + NADH + 2 H(+). It functions in the pathway amino-acid degradation; L-proline degradation into L-glutamate; L-glutamate from L-proline: step 2/2. This is 1-pyrroline-5-carboxylate dehydrogenase from Geobacillus sp. (strain WCH70).